The following is a 450-amino-acid chain: Exodeoxyribonuclease 7 large subunit (450 aa).

The protein belongs to the XseA family. Heterooligomer composed of large and small subunits.

It localises to the cytoplasm. The catalysed reaction is Exonucleolytic cleavage in either 5'- to 3'- or 3'- to 5'-direction to yield nucleoside 5'-phosphates.. Bidirectionally degrades single-stranded DNA into large acid-insoluble oligonucleotides, which are then degraded further into small acid-soluble oligonucleotides. The chain is Exodeoxyribonuclease 7 large subunit from Listeria monocytogenes serovar 1/2a (strain ATCC BAA-679 / EGD-e).